A 1415-amino-acid polypeptide reads, in one-letter code: DNA-directed RNA polymerase subunit beta' (1415 aa).

Zn(2+) is bound by residues Cys-72, Cys-74, Cys-87, and Cys-90. Mg(2+)-binding residues include Asp-463, Asp-465, and Asp-467. 4 residues coordinate Zn(2+): Cys-811, Cys-885, Cys-892, and Cys-895.

The protein belongs to the RNA polymerase beta' chain family. In terms of assembly, the RNAP catalytic core consists of 2 alpha, 1 beta, 1 beta' and 1 omega subunit. When a sigma factor is associated with the core the holoenzyme is formed, which can initiate transcription. The cofactor is Mg(2+). Requires Zn(2+) as cofactor.

The catalysed reaction is RNA(n) + a ribonucleoside 5'-triphosphate = RNA(n+1) + diphosphate. Functionally, DNA-dependent RNA polymerase catalyzes the transcription of DNA into RNA using the four ribonucleoside triphosphates as substrates. The chain is DNA-directed RNA polymerase subunit beta' from Cereibacter sphaeroides (strain ATCC 17023 / DSM 158 / JCM 6121 / CCUG 31486 / LMG 2827 / NBRC 12203 / NCIMB 8253 / ATH 2.4.1.) (Rhodobacter sphaeroides).